A 175-amino-acid polypeptide reads, in one-letter code: Large ribosomal subunit protein uL10 (175 aa).

Belongs to the universal ribosomal protein uL10 family. Part of the ribosomal stalk of the 50S ribosomal subunit. The N-terminus interacts with L11 and the large rRNA to form the base of the stalk. The C-terminus forms an elongated spine to which L12 dimers bind in a sequential fashion forming a multimeric L10(L12)X complex.

Functionally, forms part of the ribosomal stalk, playing a central role in the interaction of the ribosome with GTP-bound translation factors. This is Large ribosomal subunit protein uL10 from Methylococcus capsulatus (strain ATCC 33009 / NCIMB 11132 / Bath).